The sequence spans 934 residues: Complement component C6 (934 aa).

A signal peptide spans 1–21; the sequence is MTRHLTLCFILLVMLIDKSEA. 11 cysteine pairs are disulfide-bonded: Cys-22–Cys-61, Cys-24–Cys-65, Cys-35–Cys-73, Cys-39–Cys-78, Cys-82–Cys-117, Cys-93–Cys-127, Cys-96–Cys-133, Cys-140–Cys-151, Cys-146–Cys-164, Cys-158–Cys-173, and Cys-180–Cys-218. TSP type-1 domains lie at 22–79 and 81–134; these read CFCD…QTCP and NCVL…KLCK. Positions 138 to 175 constitute an LDL-receptor class A domain; sequence TNCKNKFLCDSGRCIPSKLECNGENDCGDNSDERNCGR. Leu-156, Asn-159, Glu-161, Asp-163, Asp-169, and Glu-170 together coordinate Ca(2+). An MACPF domain is found at 176 to 522; it reads TKPVCTRIYT…EYAAKFDPCQ (347 aa). A beta stranded membrane pass occupies residues 278–290; the sequence is FFPIPIFHFSEKN. N-linked (GlcNAc...) asparagine glycosylation occurs at Asn-324. 16 disulfides stabilise this stretch: Cys-399/Cys-420, Cys-499/Cys-623, Cys-521/Cys-570, Cys-523/Cys-539, Cys-526/Cys-541, Cys-543/Cys-552, Cys-577/Cys-611, Cys-589/Cys-601, Cys-644/Cys-686, Cys-672/Cys-699, Cys-704/Cys-746, Cys-732/Cys-761, Cys-773/Cys-823, Cys-784/Cys-801, Cys-786/Cys-837, and Cys-793/Cys-816. The beta stranded transmembrane segment at 402 to 415 threads the bilayer; sequence YETKKLKFLYMEIH. Residues 523-553 enclose the EGF-like domain; sequence CAPCPNNGRPRLSGTECLCVCQSGTYGENCE. Residues 565–612 enclose the TSP type-1 3 domain; that stretch reads DGNWGCWSSWSACNAAYRRSRTRECNNPAPQRGGQSCGGKDQQEEDCT. CCP regions lie at residues 611–688 and 689–765; these read CTVS…RCLP and DRTW…EQAI. Sushi domains lie at 642–701 and 702–763; these read SGCS…ECQR and TSCL…TCEQ. The C5b-binding domain stretch occupies residues 642 to 934; the sequence is SGCSQPPLPE…EILNPGRCPD (293 aa). The tract at residues 766–840 is factor I module (FIM) 1; the sequence is LTKSKDLCPP…FVHSGSCQEG (75 aa). One can recognise a Kazal-like 1 domain in the interval 785-839; it reads ICMSPEEDCSAYSEDLCIFDGGSSQYFTSSACKFLAGKCLNNTQSHFVHSGSCQE. N-linked (GlcNAc...) asparagine glycosylation is found at Asn-825, Asn-855, and Asn-872. A factor I module (FIM) 2 region spans residues 858–934; sequence KRVSCGYNTC…EILNPGRCPD (77 aa). 5 disulfides stabilise this stretch: Cys-862/Cys-873, Cys-867/Cys-919, Cys-880/Cys-897, Cys-882/Cys-932, and Cys-888/Cys-912. Residues 876–934 enclose the Kazal-like 2 domain; that stretch reads HTSNCVCLLPPQCSKDENQLYCVKIGSSMREKTVNICTLGAVRCANIKVEILNPGRCPD.

The protein belongs to the complement C6/C7/C8/C9 family. In terms of assembly, component of the membrane attack complex (MAC), composed of complement C5b, C6, C7, C8A, C8B, C8G and multiple copies of the pore-forming subunit C9. Post-translationally, all cysteine residues are assumed to be cross-linked to one another. Individual modules containing an even number of conserved cysteine residues are supposed to have disulfide linkages only within the same module.

It localises to the secreted. Its subcellular location is the target cell membrane. Membrane attack complex (MAC) assembly is inhibited by CD59, thereby protecting self-cells from damage during complement activation. MAC assembly is also inhibited by clusterin (CLU) chaperones that inhibit polymerization of C9. In terms of biological role, component of the membrane attack complex (MAC), a multiprotein complex activated by the complement cascade, which inserts into a target cell membrane and forms a pore, leading to target cell membrane rupture and cell lysis. The MAC is initiated by proteolytic cleavage of C5 into complement C5b in response to the classical, alternative, lectin and GZMK complement pathways. The complement pathways consist in a cascade of proteins that leads to phagocytosis and breakdown of pathogens and signaling that strengthens the adaptive immune system. Together with component C5b, involved in MAC complex assembly: complement C5b and C6 associate with the outer leaflet of target cell membrane, reducing the energy for membrane bending. The protein is Complement component C6 of Mus musculus (Mouse).